We begin with the raw amino-acid sequence, 370 residues long: StAR-related lipid transfer protein 7, mitochondrial (370 aa).

A mitochondrion-targeting transit peptide spans 1–58 (MLPRRLLAAWLAGTRGGGLLALLANQCRFVTGLRVRRAQQIAQLYGRLYSESSRRVLL). Positions 86–111 (DEERIQEEELQRSINEMKRLEEMSNM) form a coiled coil. 2 disordered regions span residues 111–138 (MFQS…EGKE) and 343–370 (MSSE…IEYA). Residues 112 to 327 (FQSSGVQHHP…LHMATLKAKN (216 aa)) form the START domain.

In terms of processing, proteolytically cleaved by PARL. In terms of tissue distribution, expressed in nasal epithelial cells. Down-regulated in nasal epithelial cells in patients experiencing an asthma exacerbation as compared to stable asthmatics and healthy controls.

Its subcellular location is the mitochondrion. Functionally, may play a protective role in mucosal tissues by preventing exaggerated allergic responses. The chain is StAR-related lipid transfer protein 7, mitochondrial (STARD7) from Homo sapiens (Human).